Consider the following 616-residue polypeptide: Dihydroxy-acid dehydratase (616 aa).

A Mg(2+)-binding site is contributed by Asp81. Cys122 serves as a coordination point for [2Fe-2S] cluster. Residues Asp123 and Lys124 each contribute to the Mg(2+) site. Position 124 is an N6-carboxylysine (Lys124). Position 195 (Cys195) interacts with [2Fe-2S] cluster. Mg(2+) is bound at residue Glu491. Ser517 serves as the catalytic Proton acceptor.

It belongs to the IlvD/Edd family. Homodimer. It depends on [2Fe-2S] cluster as a cofactor. Requires Mg(2+) as cofactor.

It catalyses the reaction (2R)-2,3-dihydroxy-3-methylbutanoate = 3-methyl-2-oxobutanoate + H2O. The enzyme catalyses (2R,3R)-2,3-dihydroxy-3-methylpentanoate = (S)-3-methyl-2-oxopentanoate + H2O. Its pathway is amino-acid biosynthesis; L-isoleucine biosynthesis; L-isoleucine from 2-oxobutanoate: step 3/4. The protein operates within amino-acid biosynthesis; L-valine biosynthesis; L-valine from pyruvate: step 3/4. Functionally, functions in the biosynthesis of branched-chain amino acids. Catalyzes the dehydration of (2R,3R)-2,3-dihydroxy-3-methylpentanoate (2,3-dihydroxy-3-methylvalerate) into 2-oxo-3-methylpentanoate (2-oxo-3-methylvalerate) and of (2R)-2,3-dihydroxy-3-methylbutanoate (2,3-dihydroxyisovalerate) into 2-oxo-3-methylbutanoate (2-oxoisovalerate), the penultimate precursor to L-isoleucine and L-valine, respectively. This is Dihydroxy-acid dehydratase from Photorhabdus laumondii subsp. laumondii (strain DSM 15139 / CIP 105565 / TT01) (Photorhabdus luminescens subsp. laumondii).